Reading from the N-terminus, the 120-residue chain is Small ribosomal subunit protein eS24 (120 aa).

The segment at 101 to 120 (RDAGTKQKKGGSKGGQGAKG) is disordered.

This sequence belongs to the eukaryotic ribosomal protein eS24 family.

The polypeptide is Small ribosomal subunit protein eS24 (Saccharolobus islandicus (strain M.16.27) (Sulfolobus islandicus)).